Reading from the N-terminus, the 110-residue chain is tRNA-binding protein YgjH (110 aa).

The region spanning 8–110 (DFARLEMRVG…RMMPAGVRVV (103 aa)) is the tRNA-binding domain.

Homodimer.

The polypeptide is tRNA-binding protein YgjH (ygjH) (Escherichia coli (strain K12)).